We begin with the raw amino-acid sequence, 461 residues long: Ribosomal protein uS12 methylthiotransferase RimO (461 aa).

Positions 13-128 constitute an MTTase N-terminal domain; it reads PKVGFVSLGC…VMQHVHMHLP (116 aa). Positions 22, 58, 87, 159, 163, and 166 each coordinate [4Fe-4S] cluster. The Radical SAM core domain maps to 145-390; the sequence is LTPRHYAYLK…MEVAEEVSAK (246 aa). One can recognise a TRAM domain in the interval 393-461; it reads AKKVGKTLKV…ADGHDLWGEV (69 aa).

This sequence belongs to the methylthiotransferase family. RimO subfamily. Requires [4Fe-4S] cluster as cofactor.

It is found in the cytoplasm. It catalyses the reaction L-aspartate(89)-[ribosomal protein uS12]-hydrogen + (sulfur carrier)-SH + AH2 + 2 S-adenosyl-L-methionine = 3-methylsulfanyl-L-aspartate(89)-[ribosomal protein uS12]-hydrogen + (sulfur carrier)-H + 5'-deoxyadenosine + L-methionine + A + S-adenosyl-L-homocysteine + 2 H(+). In terms of biological role, catalyzes the methylthiolation of an aspartic acid residue of ribosomal protein uS12. In Paraburkholderia xenovorans (strain LB400), this protein is Ribosomal protein uS12 methylthiotransferase RimO.